The primary structure comprises 1327 residues: Putative ATP-dependent RNA helicase ucp12 (1327 aa).

Disordered regions lie at residues 1 to 58 and 201 to 222; these read MGSK…KQLV and QAAR…NEKV. Residues 18–41 are compositionally biased toward basic and acidic residues; it reads SKNKEKNIKGKKKNSLDPIEKNKQ. Residues 42–58 show a composition bias toward polar residues; the sequence is ETAGLQTTSRPTAKQLV. The UBA domain maps to 276–315; the sequence is EPDTSIVNDLISLGFRDIHAKEACQYCVSLEDALEWLIIH. Residues 405–504 enclose the RWD domain; sequence DDVSALQSIL…NHLQENIEDF (100 aa). The Helicase ATP-binding domain maps to 587-756; sequence MDAIQHSQVV…FGNAGHLHIH (170 aa). 600–607 provides a ligand contact to ATP; sequence GETGSGKS. The DEAH box signature appears at 703–706; the sequence is DEVH. Positions 797 to 968 constitute a Helicase C-terminal domain; that stretch reads LISRLVSSID…QVCLNVVPLV (172 aa).

The protein belongs to the DEAD box helicase family. DEAH subfamily.

The protein resides in the cytoplasm. The catalysed reaction is ATP + H2O = ADP + phosphate + H(+). Functionally, probable ATP-binding RNA helicase. The sequence is that of Putative ATP-dependent RNA helicase ucp12 (ucp12) from Schizosaccharomyces pombe (strain 972 / ATCC 24843) (Fission yeast).